The sequence spans 553 residues: NADH-quinone oxidoreductase subunit M (553 aa).

3 helical membrane passes run 4-24, 34-54, and 84-104; these read VPWL…IILL, WAGM…AAEF, and IAVV…VAGW. A disordered region spans residues 113-135; sequence LSPASGRYPQRPAPPRLRSSGGE. A run of 10 helical transmembrane segments spans residues 140–160, 164–184, 197–217, 246–266, 316–336, 342–362, 371–391, 420–440, 447–467, and 492–512; these read VHAY…SVIA, LLFY…IGGF, FLLY…GLYV, AVFK…APLW, PLIV…AIGQ, LIAY…FVMT, LYML…GFLI, AMAT…LVLL, WLAA…MLWL, and IVVA…KPVL. Residues 527–553 form a disordered region; the sequence is GQHDPAPSVAHPVPAVGASRTAEGPHP. A compositionally biased stretch (low complexity) spans 531–544; sequence PAPSVAHPVPAVGA.

It belongs to the complex I subunit 4 family.

Its subcellular location is the cell membrane. It catalyses the reaction a quinone + NADH + 5 H(+)(in) = a quinol + NAD(+) + 4 H(+)(out). Its function is as follows. NDH-1 shuttles electrons from NADH, via FMN and iron-sulfur (Fe-S) centers, to quinones in the respiratory chain. The immediate electron acceptor for the enzyme in this species is believed to be menaquinone. Couples the redox reaction to proton translocation (for every two electrons transferred, four hydrogen ions are translocated across the cytoplasmic membrane), and thus conserves the redox energy in a proton gradient. This Mycobacterium tuberculosis (strain CDC 1551 / Oshkosh) protein is NADH-quinone oxidoreductase subunit M (nuoM).